The following is a 142-amino-acid chain: Hemoglobin subunit zeta (142 aa).

Serine 2 bears the N-acetylserine mark. The Globin domain occupies 2–142 (SLMKNERAII…LSSILTEKYR (141 aa)). Phosphothreonine is present on threonine 29. Phosphoserine is present on serine 53. Histidine 59 serves as a coordination point for heme b. Serine 73 is subject to Phosphoserine. Heme b is bound at residue histidine 88.

The protein belongs to the globin family. Heterotetramer of two zeta chains and beta-type chains.

In terms of biological role, the zeta chain is an alpha-type chain of mammalian embryonic hemoglobin. This chain is Hemoglobin subunit zeta (Hbz), found in Mus musculus (Mouse).